Consider the following 217-residue polypeptide: D-methionine transport system permease protein MetI (217 aa).

Residues 1 to 19 (MSEPMMWLLVRGVWETLAM) are Periplasmic-facing. An ABC transmembrane type-1 domain is found at 13-204 (VWETLAMTFV…LLVILVYLIQ (192 aa)). The helical transmembrane segment at 20–40 (TFVSGFFGFVVGLPVGVLLYV) threads the bilayer. The Cytoplasmic portion of the chain corresponds to 41–57 (TRPGQIIANAKLYRTVS). Residues 58–78 (AIVNIFRSIPFIILLVWMIPF) traverse the membrane as a helical segment. The Periplasmic segment spans residues 79–80 (TR). Residues 81–101 (VIVGTSIGLQAAIVPLTVGAA) traverse the membrane as a helical segment. Over 102 to 151 (PFIARMVENALLEIPTGLIEASRAMGATPMQIVRKVLLPEALPGLVNAAT) the chain is Cytoplasmic. A helical membrane pass occupies residues 152–172 (ITLITLVGYSAMGGAVGAGGL). The Periplasmic segment spans residues 173–185 (GQIGYQYGYIGYN). Residues 186–206 (ATVMNTVLVLLVILVYLIQFA) traverse the membrane as a helical segment. Residues 207 to 217 (GDRIVRAVTRK) lie on the Cytoplasmic side of the membrane.

This sequence belongs to the binding-protein-dependent transport system permease family. CysTW subfamily.

The protein resides in the cell inner membrane. Functionally, part of the binding-protein-dependent transport system for D-methionine and the toxic methionine analog alpha-methyl-methionine. Probably responsible for the translocation of the substrate across the membrane. The sequence is that of D-methionine transport system permease protein MetI (metI) from Escherichia coli O157:H7.